Here is a 385-residue protein sequence, read N- to C-terminus: uncharacterized protein (385 aa).

An N6-(pyridoxal phosphate)lysine modification is found at K194.

This sequence belongs to the class-V pyridoxal-phosphate-dependent aminotransferase family. Requires pyridoxal 5'-phosphate as cofactor.

This is an uncharacterized protein from Methanocaldococcus jannaschii (strain ATCC 43067 / DSM 2661 / JAL-1 / JCM 10045 / NBRC 100440) (Methanococcus jannaschii).